A 424-amino-acid chain; its full sequence is Inositol phosphosphingolipids phospholipase C (424 aa).

E49 is a binding site for Mg(2+). The active-site Proton acceptor is the H289. A run of 2 helical transmembrane segments spans residues 335–357 and 364–386; these read LRIA…IAWC and VIIL…CIGL.

The protein belongs to the neutral sphingomyelinase family. It depends on Mg(2+) as a cofactor.

It localises to the cell membrane. It is found in the endoplasmic reticulum membrane. Its pathway is lipid metabolism; sphingolipid metabolism. Its function is as follows. Inositol phosphosphingolipids phospholipase essential for the coordination of cell wall formation. Responsible for the hydrolysis of the phosphosphingolipids (IPS), inositol phosphorylceramide (IPC), mannosylinositol phosphorylceramide (MIPC), and mannosyldiinositol phosphorylceramide (M(IP)2C). The sequence is that of Inositol phosphosphingolipids phospholipase C (css1) from Schizosaccharomyces pombe (strain 972 / ATCC 24843) (Fission yeast).